A 146-amino-acid chain; its full sequence is Pre-mRNA-splicing factor cwf14 (146 aa).

Belongs to the BUD31 (G10) family. In terms of assembly, belongs to the 40S cdc5-associated complex (or cwf complex), a spliceosome sub-complex reminiscent of a late-stage spliceosome composed of the U2, U5 and U6 snRNAs and at least brr2, cdc5, cwf2/prp3, cwf3/syf1, cwf4/syf3, cwf5/ecm2, spp42/cwf6, cwf7/spf27, cwf8, cwf9, cwf10, cwf11, cwf12, prp45/cwf13, cwf14, cwf15, cwf16, cwf17, cwf18, cwf19, cwf20, cwf21, cwf22, cwf23, cwf24, cwf25, cwf26, cyp7/cwf27, cwf28, cwf29/ist3, lea1, msl1, prp5/cwf1, prp10, prp12/sap130, prp17, prp22, sap61, sap62, sap114, sap145, slu7, smb1, smd1, smd3, smf1, smg1 and syf2.

The protein localises to the nucleus. In terms of biological role, involved in mRNA splicing where it associates with cdc5 and the other cwf proteins as part of the spliceosome. This chain is Pre-mRNA-splicing factor cwf14 (cwf14), found in Schizosaccharomyces pombe (strain 972 / ATCC 24843) (Fission yeast).